The following is a 234-amino-acid chain: Thiamine import ATP-binding protein ThiQ (234 aa).

The ABC transporter domain occupies 2–230 (LVLDDVQYTY…HPSKTLQAFV (229 aa)). 32 to 39 (GPSGAGKS) contributes to the ATP binding site.

Belongs to the ABC transporter superfamily. Thiamine importer (TC 3.A.1.19.1) family. In terms of assembly, the complex is composed of two ATP-binding proteins (ThiQ), two transmembrane proteins (ThiP) and a solute-binding protein (ThiB).

It is found in the cell inner membrane. The catalysed reaction is thiamine(out) + ATP + H2O = thiamine(in) + ADP + phosphate + H(+). In terms of biological role, part of the ABC transporter complex ThiBPQ involved in thiamine import. Responsible for energy coupling to the transport system. The sequence is that of Thiamine import ATP-binding protein ThiQ from Vibrio parahaemolyticus serotype O3:K6 (strain RIMD 2210633).